Consider the following 476-residue polypeptide: Glutamate--tRNA ligase (476 aa).

The 'HIGH' region motif lies at P9 to T19. The 'KMSKS' region signature appears at K248 to R252. K251 lines the ATP pocket.

This sequence belongs to the class-I aminoacyl-tRNA synthetase family. Glutamate--tRNA ligase type 1 subfamily. In terms of assembly, monomer.

Its subcellular location is the cytoplasm. It carries out the reaction tRNA(Glu) + L-glutamate + ATP = L-glutamyl-tRNA(Glu) + AMP + diphosphate. In terms of biological role, catalyzes the attachment of glutamate to tRNA(Glu) in a two-step reaction: glutamate is first activated by ATP to form Glu-AMP and then transferred to the acceptor end of tRNA(Glu). This chain is Glutamate--tRNA ligase, found in Prochlorococcus marinus (strain MIT 9303).